The primary structure comprises 328 residues: Cytochrome c biogenesis protein CcsA (328 aa).

8 helical membrane-spanning segments follow: residues 13 to 33 (ISFS…LVNL), 46 to 66 (GIII…IYSG), 73 to 93 (LYES…VSYF), 101 to 121 (LNAI…SGLL), 146 to 166 (MILG…LLVI), 234 to 254 (IISL…VWAN), 263 to 283 (WDPK…YLHI), and 295 to 315 (AIVA…VNLL).

It belongs to the CcmF/CycK/Ccl1/NrfE/CcsA family. May interact with Ccs1.

The protein localises to the plastid. Its subcellular location is the chloroplast thylakoid membrane. In terms of biological role, required during biogenesis of c-type cytochromes (cytochrome c6 and cytochrome f) at the step of heme attachment. This Capsella bursa-pastoris (Shepherd's purse) protein is Cytochrome c biogenesis protein CcsA.